A 412-amino-acid chain; its full sequence is MEEKALTPEQTQEVERQLEILKRGVVEIVPEEALREKIEKSVRTGKPLKVKLGMDPSAPDVHIGHTVVLHKLRQFQDLGHEVQMLIGDFTGRIGDPSGKSETRKQLTDEQVKANARTYVEQYGKILDMEKATLHYNSKWLSALNFEDVIKLASQMTVARMLERDDFEKRYKSGQPISIHEFFYPLMQGYDSVALESDIEIGGTDQKFNLLMGRMLQEAYGNDKQVAITMPLIEGLDGERKMSKSLNNYIGIDEAPNEIFGKAMSIPDELMVKYYELATDLSMDEVKAIAKGLEDGSVHPRDAKMKLGATLVRMYHGEKEAEEAVNYFKTVFQKRDLPTDIPEVKWDGESPVWIVDLLVTLDLLPSKGEARRMVQNGGVKLNGEKVEDVQLQVEIEDGLIVQVGKRKFKKLVR.

The 'HIGH' region motif lies at 56–65 (PSAPDVHIGH). Positions 240 to 244 (KMSKS) match the 'KMSKS' region motif. Residue Lys-243 participates in ATP binding. One can recognise an S4 RNA-binding domain in the interval 351 to 412 (VWIVDLLVTL…GKRKFKKLVR (62 aa)).

Belongs to the class-I aminoacyl-tRNA synthetase family. TyrS type 2 subfamily. Homodimer.

The protein resides in the cytoplasm. The catalysed reaction is tRNA(Tyr) + L-tyrosine + ATP = L-tyrosyl-tRNA(Tyr) + AMP + diphosphate + H(+). Catalyzes the attachment of tyrosine to tRNA(Tyr) in a two-step reaction: tyrosine is first activated by ATP to form Tyr-AMP and then transferred to the acceptor end of tRNA(Tyr). The protein is Tyrosine--tRNA ligase of Halalkalibacterium halodurans (strain ATCC BAA-125 / DSM 18197 / FERM 7344 / JCM 9153 / C-125) (Bacillus halodurans).